The sequence spans 973 residues: E3 ubiquitin-protein ligase BRE1A (973 aa).

The interval 1–37 (MSGIGNKRAAGEPGTSMPPEKKTAVEDSGTTVETIKL) is disordered. Residue Lys-21 is modified to N6-acetyllysine. Ser-41 bears the Phosphoserine mark. Positions 43-90 (TEELDIRTLQSKNRKLAEMLDQRQAIEDELREHIEKLERRQATDDASL) form a coiled coil. Residues 128 to 153 (VVPEPEPDSDSNQERKDDRERGDGQE) are disordered. Residues Ser-136 and Ser-138 each carry the phosphoserine modification. The span at 139–151 (NQERKDDRERGDG) shows a compositional bias: basic and acidic residues. Coiled-coil stretches lie at residues 168–378 (EEME…VKET) and 429–896 (SLHK…TTKK). Residues Lys-348 and Lys-510 each carry the N6-acetyllysine modification. Positions 507–620 (DLNKTRLRSG…GKHDDGRKKE (114 aa)) are disordered. Ser-522 carries the phosphoserine modification. 2 stretches are compositionally biased toward basic and acidic residues: residues 527–544 (EDPKDEPTELKQDSEDLA) and 553–620 (SQED…RKKE). A Phosphoserine modification is found at Ser-560. The RING-type zinc-finger motif lies at 920–959 (CPCCNMRKKDAVLTKCFHVFCFECVKTRYDTRQRKCPKCN).

Belongs to the BRE1 family. In terms of assembly, component of the RNF20/40 complex (also known as BRE1 complex) probably composed of 2 copies of RNF20/BRE1A and 2 copies of RNF40/BRE1B. Interacts with UBE2E1/UBCH6. Interacts with p53/TP53 and WAC. Interacts with PAF1; the interaction mediates the association of the PAF1 and RNF20/40 complexes which is a prerequsite for recruitment of UBE2A/B. Interacts with PA2G4. Interacts with FBXL19.

It is found in the nucleus. The enzyme catalyses S-ubiquitinyl-[E2 ubiquitin-conjugating enzyme]-L-cysteine + [acceptor protein]-L-lysine = [E2 ubiquitin-conjugating enzyme]-L-cysteine + N(6)-ubiquitinyl-[acceptor protein]-L-lysine.. The protein operates within protein modification; protein ubiquitination. Functionally, component of the RNF20/40 E3 ubiquitin-protein ligase complex that mediates monoubiquitination of 'Lys-120' of histone H2B (H2BK120ub1). H2BK120ub1 gives a specific tag for epigenetic transcriptional activation and is also prerequisite for histone H3 'Lys-4' and 'Lys-79' methylation (H3K4me and H3K79me, respectively). It thereby plays a central role in histone code and gene regulation. The RNF20/40 complex forms a H2B ubiquitin ligase complex in cooperation with the E2 enzyme UBE2A or UBE2B; reports about the cooperation with UBE2E1/UBCH are contradictory. Required for transcriptional activation of Hox genes. Recruited to the MDM2 promoter, probably by being recruited by p53/TP53, and thereby acts as a transcriptional coactivator. Mediates the polyubiquitination of PA2G4 leading to its proteasome-mediated degradation. In Mus musculus (Mouse), this protein is E3 ubiquitin-protein ligase BRE1A (Rnf20).